Reading from the N-terminus, the 510-residue chain is MMQHKEIKHPYQGIKYTVLVVIAAFRVANALTTKTFFQPDEYWQSLEPAHRLAYGYGYLTWEWHEGLRSSLPPLVGAGIYKALQLLGLDDPRIVRIAPKIVMALFASAGDVYTWKLSARLQGPAEAPWALFVSLLSAFNWFFLTRTFSNSAEMVLTAVALNYWSFNGKEVNFKRLSVALFIGAISCVLRPTNAILWAVLGLHLVLTTTAKMRVLWLAVRNVALVFAATYYIDYLYYGEPVFPLLNFLKFNLLQSLAHFYGTSPTLYYFYEALPLLTVGWLPLTLWGLWINRSQVLVKAALAVVVAFSLIRHKEVRFIYPLVPILHMAAAEAITQTPKKLRKWLVWSLALVNILVAGYFSQVHQRGVVDVVEYLSTEPQVTSVGFLMPCHSTPYQSHLHRDIPVWFLTCEPPIGFTAEEQMTYRDQADQFYDDPLQFVQTQFPESVAVSAREARTPLFHPSHLAIFESLEKKSPEVIEHLVELGYKRGKTFFNSHFHDDWRREGDVVVYNL.

The next 7 helical transmembrane spans lie at 17–37, 96–116, 123–143, 145–163, 179–199, 221–241, and 269–289; these read TVLVVIAAFRVANALTTKTFF, IAPKIVMALFASAGDVYTWKL, PAEAPWALFVSLLSAFNWFFL, RTFSNSAEMVLTAVALNYW, LFIGAISCVLRPTNAILWAVL, VALVFAATYYIDYLYYGEPVF, and YEALPLLTVGWLPLTLWGLWI. Asn-290 carries an N-linked (GlcNAc...) asparagine glycan. 2 helical membrane-spanning segments follow: residues 316-336 and 342-362; these read FIYPLVPILHMAAAEAITQTP and WLVWSLALVNILVAGYFSQVH.

This sequence belongs to the glycosyltransferase 22 family. PIGB subfamily.

It localises to the endoplasmic reticulum membrane. The protein operates within glycolipid biosynthesis; glycosylphosphatidylinositol-anchor biosynthesis. Functionally, mannosyltransferase involved in glycosylphosphatidylinositol-anchor biosynthesis. Transfers the third mannose to Man2-GlcN-acyl-PI during GPI precursor assembly. This is GPI mannosyltransferase 3 (GPI10) from Yarrowia lipolytica (strain CLIB 122 / E 150) (Yeast).